Here is a 433-residue protein sequence, read N- to C-terminus: G-protein coupled receptor 22 (433 aa).

The Extracellular portion of the chain corresponds to 1-45 (MCFSPILEINMQSESNITVRDDIDDINTNMYQPLSYPLSFQVSLT). The N-linked (GlcNAc...) asparagine glycan is linked to asparagine 16. Residues 46-66 (GFLMLEIVLGLGSNLTVLVLY) form a helical membrane-spanning segment. Residues 67-85 (CMKSNLINSVSNIITMNLH) are Cytoplasmic-facing. The chain crosses the membrane as a helical span at residues 86-106 (VLDVIICVGCIPLTIVILLLS). The Extracellular portion of the chain corresponds to 107-115 (LESNTALIC). A helical transmembrane segment spans residues 116 to 136 (CFHEACVSFASVSTAINVFAI). Residues 137-156 (TLDRYDISVKPANRILTMGR) lie on the Cytoplasmic side of the membrane. Residues 157–177 (AVMLMISIWIFSFFSFLIPFI) traverse the membrane as a helical segment. The Extracellular segment spans residues 178–208 (EVNFFSLQSGNTWENKTLLCVSTNEYYTELG). Residue asparagine 192 is glycosylated (N-linked (GlcNAc...) asparagine). Residues 209 to 229 (MYYHLLVQIPIFFFTVVVMLI) traverse the membrane as a helical segment. At 230-315 (TYTKILQALN…ERQKRVFRMS (86 aa)) the chain is on the cytoplasmic side. A helical membrane pass occupies residues 316-336 (LLIISTFLLCWTPISVLNTTI). At 337–349 (LCLGPSDLLVKLR) the chain is on the extracellular side. A helical membrane pass occupies residues 350–370 (LCFLVMAYGTTIFHPLLYAFT). Residues 371–433 (RQKFQKVLKS…KCLVPQVVTD (63 aa)) are Cytoplasmic-facing.

It belongs to the G-protein coupled receptor 1 family. As to expression, high expression in adult and fetal heart tissue. Expressed in the brain, with enrichment in the accumbens, amygdala, cerebellum, cortex, and hippocampus regions.

Its subcellular location is the cell membrane. In terms of biological role, orphan G-protein coupled receptor. Seems to act through a G(i)/G(o) mediated pathway. May be involved in ciliogenesis. In Homo sapiens (Human), this protein is G-protein coupled receptor 22.